The chain runs to 717 residues: Fatty acid oxidation complex subunit alpha (717 aa).

The enoyl-CoA hydratase/isomerase stretch occupies residues 1–190; that stretch reads MIHAGNAITV…KDGAVDAVVS (190 aa). Residue Asp298 coordinates substrate. The segment at 313–717 is 3-hydroxyacyl-CoA dehydrogenase; that stretch reads HPVNQAAVLG…MAENNKKFYG (405 aa). NAD(+)-binding positions include Met326, Asp345, 402–404, Lys409, and Ser431; that span reads VTE. Catalysis depends on His452, which acts as the For 3-hydroxyacyl-CoA dehydrogenase activity. Residue Asn455 participates in NAD(+) binding. Residue Asn502 participates in substrate binding.

The protein in the N-terminal section; belongs to the enoyl-CoA hydratase/isomerase family. In the C-terminal section; belongs to the 3-hydroxyacyl-CoA dehydrogenase family. Heterotetramer of two alpha chains (FadB) and two beta chains (FadA).

The enzyme catalyses a (3S)-3-hydroxyacyl-CoA + NAD(+) = a 3-oxoacyl-CoA + NADH + H(+). It catalyses the reaction a (3S)-3-hydroxyacyl-CoA = a (2E)-enoyl-CoA + H2O. It carries out the reaction a 4-saturated-(3S)-3-hydroxyacyl-CoA = a (3E)-enoyl-CoA + H2O. The catalysed reaction is (3S)-3-hydroxybutanoyl-CoA = (3R)-3-hydroxybutanoyl-CoA. The enzyme catalyses a (3Z)-enoyl-CoA = a 4-saturated (2E)-enoyl-CoA. It catalyses the reaction a (3E)-enoyl-CoA = a 4-saturated (2E)-enoyl-CoA. It functions in the pathway lipid metabolism; fatty acid beta-oxidation. In terms of biological role, involved in the aerobic and anaerobic degradation of long-chain fatty acids via beta-oxidation cycle. Catalyzes the formation of 3-oxoacyl-CoA from enoyl-CoA via L-3-hydroxyacyl-CoA. It can also use D-3-hydroxyacyl-CoA and cis-3-enoyl-CoA as substrate. In Acinetobacter baylyi (strain ATCC 33305 / BD413 / ADP1), this protein is Fatty acid oxidation complex subunit alpha.